Consider the following 460-residue polypeptide: Bifunctional protein GlmU (460 aa).

A pyrophosphorylase region spans residues 1-229 (MSHYAIILAA…FEESLGVNDR (229 aa)). UDP-N-acetyl-alpha-D-glucosamine is bound by residues 8 to 11 (LAAG), Lys22, Gln72, and 77 to 78 (GT). Asp102 contacts Mg(2+). 4 residues coordinate UDP-N-acetyl-alpha-D-glucosamine: Gly139, Glu154, Asn169, and Asn227. Position 227 (Asn227) interacts with Mg(2+). Positions 230–250 (VALATAEDVMRRRINKAHMIN) are linker. The segment at 251–460 (GVTFQNPNAT…KKPHHPSQQK (210 aa)) is N-acetyltransferase. Residues Arg332 and Lys350 each contribute to the UDP-N-acetyl-alpha-D-glucosamine site. His362 functions as the Proton acceptor in the catalytic mechanism. Residues Tyr365 and Asn376 each coordinate UDP-N-acetyl-alpha-D-glucosamine. Acetyl-CoA-binding positions include Ala379, 385–386 (NY), Ser404, Ala422, and Arg439.

It in the N-terminal section; belongs to the N-acetylglucosamine-1-phosphate uridyltransferase family. In the C-terminal section; belongs to the transferase hexapeptide repeat family. In terms of assembly, homotrimer. Mg(2+) is required as a cofactor.

The protein localises to the cytoplasm. It catalyses the reaction alpha-D-glucosamine 1-phosphate + acetyl-CoA = N-acetyl-alpha-D-glucosamine 1-phosphate + CoA + H(+). The enzyme catalyses N-acetyl-alpha-D-glucosamine 1-phosphate + UTP + H(+) = UDP-N-acetyl-alpha-D-glucosamine + diphosphate. Its pathway is nucleotide-sugar biosynthesis; UDP-N-acetyl-alpha-D-glucosamine biosynthesis; N-acetyl-alpha-D-glucosamine 1-phosphate from alpha-D-glucosamine 6-phosphate (route II): step 2/2. It participates in nucleotide-sugar biosynthesis; UDP-N-acetyl-alpha-D-glucosamine biosynthesis; UDP-N-acetyl-alpha-D-glucosamine from N-acetyl-alpha-D-glucosamine 1-phosphate: step 1/1. The protein operates within bacterial outer membrane biogenesis; LPS lipid A biosynthesis. Catalyzes the last two sequential reactions in the de novo biosynthetic pathway for UDP-N-acetylglucosamine (UDP-GlcNAc). The C-terminal domain catalyzes the transfer of acetyl group from acetyl coenzyme A to glucosamine-1-phosphate (GlcN-1-P) to produce N-acetylglucosamine-1-phosphate (GlcNAc-1-P), which is converted into UDP-GlcNAc by the transfer of uridine 5-monophosphate (from uridine 5-triphosphate), a reaction catalyzed by the N-terminal domain. This is Bifunctional protein GlmU from Streptococcus thermophilus (strain CNRZ 1066).